A 69-amino-acid polypeptide reads, in one-letter code: Toxin Tma2 (69 aa).

The LCN-type CS-alpha/beta domain maps to 2–66 (KDDYPVDTAE…SPTKTSKRCN (65 aa)). 4 cysteine pairs are disulfide-bonded: cysteine 14–cysteine 65, cysteine 18–cysteine 41, cysteine 27–cysteine 48, and cysteine 31–cysteine 50.

This sequence belongs to the long (4 C-C) scorpion toxin superfamily. Sodium channel inhibitor family. In terms of tissue distribution, expressed by the venom gland.

The protein localises to the secreted. Its function is as follows. Inhibits voltage-gated sodium channels (Nav). This toxin shows insect lethality against crickets. This Tityus macrochirus (Scorpion) protein is Toxin Tma2.